The primary structure comprises 159 residues: S-ribosylhomocysteine lyase (159 aa).

Residues His53, His57, and Cys124 each contribute to the Fe cation site.

Belongs to the LuxS family. In terms of assembly, homodimer. The cofactor is Fe cation.

The catalysed reaction is S-(5-deoxy-D-ribos-5-yl)-L-homocysteine = (S)-4,5-dihydroxypentane-2,3-dione + L-homocysteine. In terms of biological role, involved in the synthesis of autoinducer 2 (AI-2) which is secreted by bacteria and is used to communicate both the cell density and the metabolic potential of the environment. The regulation of gene expression in response to changes in cell density is called quorum sensing. Catalyzes the transformation of S-ribosylhomocysteine (RHC) to homocysteine (HC) and 4,5-dihydroxy-2,3-pentadione (DPD). This Desulfotalea psychrophila (strain LSv54 / DSM 12343) protein is S-ribosylhomocysteine lyase.